A 448-amino-acid chain; its full sequence is MTKVITRFAPSPTGMLHVGNIRVALLNWLYAKKHNGKFILRFDDTDLERSKQKYKNDIERDLKFLNINCDQIFNQLSRVSRYNEIKNLLINKKRLYACYETTEELELKRKFRLSKGLPPIYDRASLNLTEKQIQKYIEQGRKPHYRFFLNDEPISWYDMIKGDIKYNGKALSDPIVIRADGSMTYMLCSVIDDIDYDITHIIRGEDHVSNTAIQIQMFEALNKIPPVFAHLSLIINKEEKISKRVGGFEIAYLKNEVGLEAMTITSFFSLLGSSLHIFPYKSIEKLVAQFEISSFSKSPTIYQQYDLERLNHKLLISLDYHEVKERLKEINADYIDENFWLSVRANLQKLSDIKDWWDICYQTPKIGNLNLDKEYLKQASELLPLGKITKDSWSIWTKEITNATGRKGKELFLPIRLALTGRKSGPEIAGILPLLKREEIIKRLVAIT.

The 'HIGH' region signature appears at proline 10–asparagine 20. The 'KMSKS' region motif lies at lysine 240–arginine 244. Lysine 243 is a binding site for ATP.

Belongs to the class-I aminoacyl-tRNA synthetase family. Glutamate--tRNA ligase type 1 subfamily. As to quaternary structure, monomer.

The protein resides in the cytoplasm. The enzyme catalyses tRNA(Glu) + L-glutamate + ATP = L-glutamyl-tRNA(Glu) + AMP + diphosphate. Functionally, catalyzes the attachment of glutamate to tRNA(Glu) in a two-step reaction: glutamate is first activated by ATP to form Glu-AMP and then transferred to the acceptor end of tRNA(Glu). The protein is Glutamate--tRNA ligase 1 of Rickettsia typhi (strain ATCC VR-144 / Wilmington).